The chain runs to 69 residues: Large ribosomal subunit protein eL38z/eL38y (69 aa).

Belongs to the eukaryotic ribosomal protein eL38 family.

This chain is Large ribosomal subunit protein eL38z/eL38y (RPL38A), found in Arabidopsis thaliana (Mouse-ear cress).